A 403-amino-acid polypeptide reads, in one-letter code: Putative glutamate--cysteine ligase 2 (403 aa).

The disordered stretch occupies residues 370–403; that stretch reads ESAAQRRAPQAARRRIRASSEPLGPMSMWPERLH.

It belongs to the glutamate--cysteine ligase type 2 family. YbdK subfamily.

The enzyme catalyses L-cysteine + L-glutamate + ATP = gamma-L-glutamyl-L-cysteine + ADP + phosphate + H(+). Its function is as follows. ATP-dependent carboxylate-amine ligase which exhibits weak glutamate--cysteine ligase activity. The protein is Putative glutamate--cysteine ligase 2 of Bordetella avium (strain 197N).